A 445-amino-acid chain; its full sequence is MGHQNAAVSENQNHDDGAASSPGFKLVGFSKFVRKNPKSDKFKVKRFHHIEFWCGDATNVARRFSWGLGMRFSAKSDLSTGNMVHASYLLTSGDLRFLFTAPYSPSLSAGEIKPTTTASIPSFDHGSCRSFFSSHGLGVRAVAIEVEDAESAFSISVANGAIPSSPPIVLNEAVTIAEVKLYGDVVLRYVSYKAEDTEKSEFLPGFERVEDASSFPLDYGIRRLDHAVGNVPELGPALTYVAGFTGFHQFAEFTADDVGTAESGLNSAVLASNDEMVLLPINEPVHGTKRKSQIQTYLEHNEGAGLQHLALMSEDIFRTLREMRKRSSIGGFDFMPSPPPTYYQNLKKRVGDVLSDDQIKECEELGILVDRDDQGTLLQIFTKPLGDRPTIFIEIIQRVGCMMKDEEGKAYQSGGCGGFGKGNFSELFKSIEEYEKTLEAKQLVG.

Residues 1–11 are compositionally biased toward polar residues; it reads MGHQNAAVSEN. The tract at residues 1–20 is disordered; it reads MGHQNAAVSENQNHDDGAAS. 2 VOC domains span residues 46–192 and 223–383; these read RFHH…YVSY and RLDH…IFTK. Fe cation-binding residues include His-226, His-308, and Glu-394.

Belongs to the 4HPPD family. In terms of assembly, homodimer. It depends on Fe cation as a cofactor.

It localises to the cytoplasm. The enzyme catalyses 3-(4-hydroxyphenyl)pyruvate + O2 = homogentisate + CO2. Its pathway is amino-acid degradation; L-phenylalanine degradation; acetoacetate and fumarate from L-phenylalanine: step 3/6. It participates in cofactor biosynthesis; prenylquinone biosynthesis. Functionally, catalyzes the conversion of 4-hydroxyphenylpyruvic acid to homogentisic acid, one of the steps in tyrosine catabolism. The chain is 4-hydroxyphenylpyruvate dioxygenase (HPD) from Arabidopsis thaliana (Mouse-ear cress).